Here is a 307-residue protein sequence, read N- to C-terminus: Homoserine kinase (307 aa).

Residue 85 to 95 participates in ATP binding; that stretch reads PLTRGLGSSAA.

The protein belongs to the GHMP kinase family. Homoserine kinase subfamily.

The protein resides in the cytoplasm. It carries out the reaction L-homoserine + ATP = O-phospho-L-homoserine + ADP + H(+). It functions in the pathway amino-acid biosynthesis; L-threonine biosynthesis; L-threonine from L-aspartate: step 4/5. In terms of biological role, catalyzes the ATP-dependent phosphorylation of L-homoserine to L-homoserine phosphate. The protein is Homoserine kinase of Caldicellulosiruptor bescii (strain ATCC BAA-1888 / DSM 6725 / KCTC 15123 / Z-1320) (Anaerocellum thermophilum).